The following is a 358-amino-acid chain: Protein PXR1 (358 aa).

2 disordered regions span residues Met1 to Ser26 and Glu146 to Thr342. Polar residues predominate over residues Lys11–Ser26. One can recognise a G-patch domain in the interval Thr25–Gly79. Composition is skewed to basic and acidic residues over residues Glu146 to Arg171 and Ser199 to Asp217. The span at Lys218–Lys227 shows a compositional bias: basic residues. The span at Asp287 to Ser299 shows a compositional bias: acidic residues. A compositionally biased stretch (polar residues) spans Thr300–Val315. A compositionally biased stretch (basic residues) spans His328 to Lys339.

Belongs to the PINX1 family.

The protein resides in the nucleus. The protein localises to the nucleolus. Its function is as follows. Involved in rRNA-processing at A0, A1 and A2 sites and negatively regulates telomerase. The chain is Protein PXR1 (PXR1) from Phaeosphaeria nodorum (strain SN15 / ATCC MYA-4574 / FGSC 10173) (Glume blotch fungus).